The primary structure comprises 214 residues: Calcineurin B homologous protein 3 (214 aa).

A lipid anchor (N-myristoyl glycine) is attached at glycine 2. Positions 110–145 (CRKDKLRFLFNMYDTDNDSKITLEEYRKVVEELLSG) constitute an EF-hand domain. 5 residues coordinate Ca(2+): aspartate 123, aspartate 125, aspartate 127, lysine 129, and glutamate 134.

This sequence belongs to the calcineurin regulatory subunit family. CHP subfamily. Monomer. Homodimer.

The protein localises to the nucleus. The protein resides in the cytoplasm. It localises to the membrane. It is found in the cell membrane. Its subcellular location is the cell projection. The protein localises to the lamellipodium. The protein resides in the ruffle membrane. In terms of biological role, functions as an integral cofactor in cell pH regulation by controlling plasma membrane-type Na(+)/H(+) exchange activity. Promotes the induction of hematopoietic stem cell differentiation toward megakaryocytic lineage. Essential for the coupling of ERK cascade activation with the expression of ETS family genes in megakaryocytic differentiation. Also involved in granulocytic differentiation in a ERK-dependent manner. Inhibits the phosphatase activity of calcineurin. The polypeptide is Calcineurin B homologous protein 3 (tesc) (Xenopus tropicalis (Western clawed frog)).